Consider the following 587-residue polypeptide: Potassium-transporting ATPase potassium-binding subunit (587 aa).

A run of 4 helical transmembrane segments spans residues 1–21 (MSTS…LWVT), 60–80 (PVYA…LYLL), 89–109 (LNLG…VSFM), and 131–151 (GLAV…IAVV). The interval 162–188 (AVGGPGGPNGPGGPGGPNGPGAGSRDD) is disordered. A compositionally biased stretch (gly residues) spans 164-183 (GGPGGPNGPGGPGGPNGPGA). The next 7 helical transmembrane spans lie at 208–228 (IRIL…GGAI), 280–300 (PTSW…FSLP), 314–334 (LAIV…NAAF), 409–429 (GLYG…LMIG), 449–469 (LYFL…MGLP), 514–534 (ALGL…LGMA), and 557–577 (FAGM…FPAL).

Belongs to the KdpA family. The system is composed of three essential subunits: KdpA, KdpB and KdpC.

Its subcellular location is the cell membrane. Its function is as follows. Part of the high-affinity ATP-driven potassium transport (or Kdp) system, which catalyzes the hydrolysis of ATP coupled with the electrogenic transport of potassium into the cytoplasm. This subunit binds the extracellular potassium ions and delivers the ions to the membrane domain of KdpB through an intramembrane tunnel. The protein is Potassium-transporting ATPase potassium-binding subunit of Frankia alni (strain DSM 45986 / CECT 9034 / ACN14a).